Reading from the N-terminus, the 244-residue chain is Probable septum site-determining protein MinC (244 aa).

The protein belongs to the MinC family. In terms of assembly, interacts with MinD and FtsZ.

Functionally, cell division inhibitor that blocks the formation of polar Z ring septums. Rapidly oscillates between the poles of the cell to destabilize FtsZ filaments that have formed before they mature into polar Z rings. Prevents FtsZ polymerization. This is Probable septum site-determining protein MinC from Dichelobacter nodosus (strain VCS1703A).